Reading from the N-terminus, the 344-residue chain is Dihydroorotase (344 aa).

Zn(2+) is bound by residues histidine 13 and histidine 15. Residues 15–17 (HLR) and asparagine 41 contribute to the substrate site. Residues lysine 99, histidine 136, and histidine 174 each coordinate Zn(2+). Lysine 99 carries the N6-carboxylysine modification. Histidine 136 lines the substrate pocket. Leucine 219 is a binding site for substrate. Aspartate 247 contributes to the Zn(2+) binding site. Aspartate 247 is a catalytic residue. Residues histidine 251 and alanine 263 each contribute to the substrate site.

The protein belongs to the metallo-dependent hydrolases superfamily. DHOase family. Class II DHOase subfamily. Homodimer. Zn(2+) is required as a cofactor.

The enzyme catalyses (S)-dihydroorotate + H2O = N-carbamoyl-L-aspartate + H(+). It functions in the pathway pyrimidine metabolism; UMP biosynthesis via de novo pathway; (S)-dihydroorotate from bicarbonate: step 3/3. Functionally, catalyzes the reversible cyclization of carbamoyl aspartate to dihydroorotate. This chain is Dihydroorotase, found in Acinetobacter baylyi (strain ATCC 33305 / BD413 / ADP1).